A 281-amino-acid chain; its full sequence is Glycerol uptake facilitator protein (281 aa).

Over 1–5 (MSQTS) the chain is Cytoplasmic. Residues 6 to 34 (TLKGQCIAEFLGTGLLIFFGVGCVAALKV) form a helical membrane-spanning segment. The Periplasmic segment spans residues 35–39 (AGASF). Residues 40–60 (GQWEISVIWGLGVAMAIYLTA) traverse the membrane as a helical segment. Topologically, residues 61–63 (GVS) are cytoplasmic. Residues 64–67 (GAHL) lie within the membrane without spanning it. Positions 68–70 (NPA) match the NPA 1 motif. An intramembrane region (helical) is located at residues 68 to 78 (NPAVTIALWLF). Residues 79–84 (ACFDKR) are Cytoplasmic-facing. The chain crosses the membrane as a helical span at residues 85 to 108 (KVIPFIVSQVAGAFCAAALVYGLY). The Periplasmic portion of the chain corresponds to 109 to 143 (YNLFFDFEQTHHIVRGSVESVDLAGTFSTYPNPHI). Residues 144–169 (NFVQAFAVEMVITAILMGLILALTDD) form a helical membrane-spanning segment. The Cytoplasmic portion of the chain corresponds to 170 to 177 (GNGVPRGP). The chain crosses the membrane as a helical span at residues 178-194 (LAPLLIGLLIAVIGASM). The Periplasmic portion of the chain corresponds to 195-198 (GPLT). An intramembrane segment occupies 199–202 (GFAM). Positions 203–205 (NPA) match the NPA 2 motif. The segment at residues 203-216 (NPARDFGPKVFAWL) is an intramembrane region (helical). The Periplasmic segment spans residues 217–231 (AGWGNVAFTGGRDIP). Residues 232 to 254 (YFLVPLFGPIVGAIVGAFAYRKL) traverse the membrane as a helical segment. The Cytoplasmic portion of the chain corresponds to 255 to 281 (IGRHLPCDICVVEEKETTTPSEQKASL).

It belongs to the MIP/aquaporin (TC 1.A.8) family. Homotetramer.

It localises to the cell inner membrane. It carries out the reaction glycerol(in) = glycerol(out). In terms of biological role, mediates glycerol diffusion across the cytoplasmic membrane via a pore-type mechanism. This chain is Glycerol uptake facilitator protein (glpF), found in Escherichia coli O157:H7.